Reading from the N-terminus, the 229-residue chain is Lactate utilization protein C (229 aa).

It belongs to the LutC/YkgG family.

Functionally, is involved in L-lactate degradation and allows cells to grow with lactate as the sole carbon source. This is Lactate utilization protein C from Shouchella clausii (strain KSM-K16) (Alkalihalobacillus clausii).